The following is a 665-amino-acid chain: Beta-galactosidase LacZ (665 aa).

Arg-110 is a binding site for substrate. Cys-114 contributes to the Zn(2+) binding site. Position 148 (Asn-148) interacts with substrate. Glu-149 serves as the catalytic Proton donor. Zn(2+) contacts are provided by Cys-157, Cys-159, and Cys-162. Residue Glu-303 is the Nucleophile of the active site. Residues Trp-311 and 351–354 (EKFH) each bind substrate.

The protein belongs to the glycosyl hydrolase 42 family.

The catalysed reaction is Hydrolysis of terminal non-reducing beta-D-galactose residues in beta-D-galactosides.. This is Beta-galactosidase LacZ from Heyndrickxia coagulans (Weizmannia coagulans).